The sequence spans 313 residues: MSGIDPKRFGKVAVLFGGESAEREVSLTSGRLVLQGLRDAGIDAHPFDPAERPLSALKDEGFVRAFNALHGGYGENGQIQGALDFYGIRYTGSGVLGSALGLDKFRTKLVWQQTGVPTPPFETVMRGDDYAARATDIVAKLGLPLFVKPASEGSSVAVLKVKTADALPAALSEAATHDKIVIVEKSIEGGGEYTACIAGDLDLPLIKIVPAGEFYDYHAKYVANDTQYLIPCGLPAEQETELKRIARRAFDVLGCTDWGRADFMLDAAGNAYFLEVNTAPGMTDHSLPPKAARSIGISYSELVVKVLALTLND.

Residues 108–308 (KLVWQQTGVP…YSELVVKVLA (201 aa)) form the ATP-grasp domain. Position 138–193 (138–193 (VAKLGLPLFVKPASEGSSVAVLKVKTADALPAALSEAATHDKIVIVEKSIEGGGEY)) interacts with ATP. Mg(2+) is bound by residues Asp-262, Glu-275, and Asn-277.

Belongs to the D-alanine--D-alanine ligase family. Mg(2+) serves as cofactor. It depends on Mn(2+) as a cofactor.

It is found in the cytoplasm. The catalysed reaction is 2 D-alanine + ATP = D-alanyl-D-alanine + ADP + phosphate + H(+). Its pathway is cell wall biogenesis; peptidoglycan biosynthesis. Cell wall formation. This is D-alanine--D-alanine ligase from Burkholderia ambifaria (strain ATCC BAA-244 / DSM 16087 / CCUG 44356 / LMG 19182 / AMMD) (Burkholderia cepacia (strain AMMD)).